The chain runs to 142 residues: Small heat shock protein IbpB (142 aa).

In terms of domain architecture, sHSP spans 26–137 (TAEHQAFPPY…APQRIAISDR (112 aa)).

The protein belongs to the small heat shock protein (HSP20) family. Homodimer. Forms homomultimers of about 100-150 subunits at optimal growth temperatures. Conformation changes to oligomers at high temperatures or high ionic concentrations. The decrease in size of the multimers is accompanied by an increase in chaperone activity.

The protein resides in the cytoplasm. Functionally, associates with aggregated proteins, together with IbpA, to stabilize and protect them from irreversible denaturation and extensive proteolysis during heat shock and oxidative stress. Aggregated proteins bound to the IbpAB complex are more efficiently refolded and reactivated by the ATP-dependent chaperone systems ClpB and DnaK/DnaJ/GrpE. Its activity is ATP-independent. This is Small heat shock protein IbpB from Enterobacter sp. (strain 638).